The sequence spans 394 residues: 1-deoxy-D-xylulose 5-phosphate reductoisomerase (394 aa).

Thr14, Gly15, Ser16, Ile17, Gly40, and Asn128 together coordinate NADPH. Lys129 contributes to the 1-deoxy-D-xylulose 5-phosphate binding site. Glu130 contributes to the NADPH binding site. Residue Asp154 participates in Mn(2+) binding. 4 residues coordinate 1-deoxy-D-xylulose 5-phosphate: Ser155, Glu156, Ser180, and His203. Position 156 (Glu156) interacts with Mn(2+). Gly209 contributes to the NADPH binding site. 1-deoxy-D-xylulose 5-phosphate contacts are provided by Ser216, Asn221, Lys222, and Glu225. Residue Glu225 participates in Mn(2+) binding.

The protein belongs to the DXR family. It depends on Mg(2+) as a cofactor. Mn(2+) serves as cofactor.

The enzyme catalyses 2-C-methyl-D-erythritol 4-phosphate + NADP(+) = 1-deoxy-D-xylulose 5-phosphate + NADPH + H(+). It functions in the pathway isoprenoid biosynthesis; isopentenyl diphosphate biosynthesis via DXP pathway; isopentenyl diphosphate from 1-deoxy-D-xylulose 5-phosphate: step 1/6. Functionally, catalyzes the NADPH-dependent rearrangement and reduction of 1-deoxy-D-xylulose-5-phosphate (DXP) to 2-C-methyl-D-erythritol 4-phosphate (MEP). The sequence is that of 1-deoxy-D-xylulose 5-phosphate reductoisomerase from Xylella fastidiosa (strain M23).